Consider the following 301-residue polypeptide: Probable alpha-L-glutamate ligase (301 aa).

The region spanning 104–287 (LQLLSRKGIG…VAGIIIEYLE (184 aa)) is the ATP-grasp domain. ATP contacts are provided by residues K141, 178-179 (EY), D187, and 211-213 (RSN). Residues D248, E260, and N262 each coordinate Mg(2+). 3 residues coordinate Mn(2+): D248, E260, and N262.

It belongs to the RimK family. The cofactor is Mg(2+). Requires Mn(2+) as cofactor.

The sequence is that of Probable alpha-L-glutamate ligase from Azotobacter vinelandii (strain DJ / ATCC BAA-1303).